Consider the following 574-residue polypeptide: Probable cytochrome c oxidase subunit 1 (574 aa).

Residues 40-60 (IGIMYCVACFIFFFVGGLLAL) form a helical membrane-spanning segment. His-86 is a Fe(II)-heme a binding site. 6 helical membrane-spanning segments follow: residues 89 to 109 (IMLLFYATPIVFGFANLVLPL), 121 to 141 (LNAFSFWLFLFGAAIGMAGFI), 170 to 190 (LWIMGLIVAGLGTILGAVNMI), 213 to 233 (ILVTSILVLIAFPLLTAALFG), 258 to 278 (LFWFFGHPEVYIIALPFFGIV), and 290 to 310 (IFGYTTLVYATLSIAALSVAV). Cu cation contacts are provided by His-264 and Tyr-268. Positions 264–268 (HPEVY) form a cross-link, 1'-histidyl-3'-tyrosine (His-Tyr). Positions 313 and 314 each coordinate Cu cation. The next 2 helical transmembrane spans lie at 315–335 (MFATGAVLLPFFSFMTYLIAV) and 359–379 (MLFSVGFAVTFLLGGLTGVLL). A heme a3-binding site is contributed by His-397. 3 helical membrane passes run 398–418 (FHYVLFGTIVFSTFAGIYFWF), 433–453 (LHFWLTFIGFHTTFLVQHWLG), and 476–496 (VSTIGSFILGASMFPFVWNVF). His-399 is a binding site for Fe(II)-heme a.

This sequence belongs to the heme-copper respiratory oxidase family. In terms of assembly, associates with subunits II, III and IV to form cytochrome c oxidase. Cu(2+) is required as a cofactor. Heme serves as cofactor.

The protein localises to the cell membrane. The catalysed reaction is 4 Fe(II)-[cytochrome c] + O2 + 8 H(+)(in) = 4 Fe(III)-[cytochrome c] + 2 H2O + 4 H(+)(out). The protein operates within energy metabolism; oxidative phosphorylation. Its function is as follows. Cytochrome c oxidase is the component of the respiratory chain that catalyzes the reduction of oxygen to water. Subunits 1-3 form the functional core of the enzyme complex. CO I is the catalytic subunit of the enzyme. Electrons originating in cytochrome c are transferred via the copper A center of subunit 2 and heme A of subunit 1 to the bimetallic center formed by heme A3 and copper B. This chain is Probable cytochrome c oxidase subunit 1 (ctaD), found in Mycobacterium leprae (strain TN).